The sequence spans 288 residues: Beta-lactamase CARB-3 (288 aa).

The N-terminal stretch at 1–17 (MKFLLAFSLLIPSVVFA) is a signal peptide. The Acyl-ester intermediate role is filled by serine 65. An intrachain disulfide couples cysteine 72 to cysteine 118. 229–231 (RSG) serves as a coordination point for substrate.

This sequence belongs to the class-A beta-lactamase family.

The catalysed reaction is a beta-lactam + H2O = a substituted beta-amino acid. Hydrolyzes both carbenicillin and oxacillin. The protein is Beta-lactamase CARB-3 (carB3) of Pseudomonas aeruginosa.